Reading from the N-terminus, the 864-residue chain is Probable LRR receptor-like serine/threonine-protein kinase At1g07550 (864 aa).

The first 23 residues, 1–23, serve as a signal peptide directing secretion; sequence MDTCTRLLFAACATLSILHLVQS. The Extracellular segment spans residues 24-507; sequence QNQQGFISLD…SCGTRFPTAA (484 aa). Asn-49, Asn-229, Asn-256, Asn-289, Asn-432, Asn-445, and Asn-464 each carry an N-linked (GlcNAc...) asparagine glycan. LRR repeat units lie at residues 411-434, 435-457, and 459-480; these read RIVK…QNLT, QLQE…LAKM, and YLLV…ALLD. The chain crosses the membrane as a helical span at residues 508–528; the sequence is VAASVSAVAIIILVLVLIFVL. Topologically, residues 529–864 are cytoplasmic; that stretch reads RRRKPSAGKV…VDTEINPKAR (336 aa). Residue Thr-551 is modified to Phosphothreonine. Residues 560-831 enclose the Protein kinase domain; the sequence is NNFQVVIGKG…QVVHVLNECL (272 aa). ATP is bound by residues 566–574 and Lys-587; that span reads IGKGGFGVV. A Phosphotyrosine modification is found at Tyr-632. Asp-684 serves as the catalytic Proton acceptor. Thr-718 and Thr-723 each carry phosphothreonine. Phosphotyrosine is present on Tyr-731.

This sequence belongs to the protein kinase superfamily. Ser/Thr protein kinase family.

The protein localises to the membrane. The catalysed reaction is L-seryl-[protein] + ATP = O-phospho-L-seryl-[protein] + ADP + H(+). The enzyme catalyses L-threonyl-[protein] + ATP = O-phospho-L-threonyl-[protein] + ADP + H(+). The chain is Probable LRR receptor-like serine/threonine-protein kinase At1g07550 from Arabidopsis thaliana (Mouse-ear cress).